We begin with the raw amino-acid sequence, 431 residues long: Adenylosuccinate synthetase (431 aa).

Residues 12 to 18 (GDEGKGK) and 40 to 42 (GHT) each bind GTP. Asp-13 functions as the Proton acceptor in the catalytic mechanism. Mg(2+) is bound by residues Asp-13 and Gly-40. IMP contacts are provided by residues 13–16 (DEGK), 38–41 (NAGH), Thr-131, Arg-145, Gln-225, Thr-240, and Arg-304. Catalysis depends on His-41, which acts as the Proton donor. A substrate-binding site is contributed by 300-306 (TTTGRKR). Residues Arg-306, 332-334 (KLD), and 414-416 (STS) contribute to the GTP site.

It belongs to the adenylosuccinate synthetase family. In terms of assembly, homodimer. The cofactor is Mg(2+).

It localises to the cytoplasm. The enzyme catalyses IMP + L-aspartate + GTP = N(6)-(1,2-dicarboxyethyl)-AMP + GDP + phosphate + 2 H(+). It participates in purine metabolism; AMP biosynthesis via de novo pathway; AMP from IMP: step 1/2. Plays an important role in the de novo pathway of purine nucleotide biosynthesis. Catalyzes the first committed step in the biosynthesis of AMP from IMP. This is Adenylosuccinate synthetase from Jannaschia sp. (strain CCS1).